Reading from the N-terminus, the 164-residue chain is UPF0114 protein YqhA (164 aa).

3 consecutive transmembrane segments (helical) span residues 15–35, 53–73, and 136–156; these read LLAP…LKFF, LILV…LVMV, and LMWY…MGYL.

The protein belongs to the UPF0114 family.

Its subcellular location is the cell membrane. The polypeptide is UPF0114 protein YqhA (Escherichia coli O139:H28 (strain E24377A / ETEC)).